We begin with the raw amino-acid sequence, 215 residues long: Ribosome maturation factor RimP (215 aa).

Residues 180-215 (KDNRARKEAKKRRGEPDDDVPEGAEADATEEHEQES) are disordered. A compositionally biased stretch (acidic residues) spans 195 to 207 (PDDDVPEGAEADA).

Belongs to the RimP family.

The protein resides in the cytoplasm. In terms of biological role, required for maturation of 30S ribosomal subunits. In Mesorhizobium japonicum (strain LMG 29417 / CECT 9101 / MAFF 303099) (Mesorhizobium loti (strain MAFF 303099)), this protein is Ribosome maturation factor RimP.